A 362-amino-acid polypeptide reads, in one-letter code: Heat-inducible transcription repressor HrcA (362 aa).

It belongs to the HrcA family.

In terms of biological role, negative regulator of class I heat shock genes (grpE-dnaK-dnaJ and groELS operons). Prevents heat-shock induction of these operons. The polypeptide is Heat-inducible transcription repressor HrcA (Bradyrhizobium sp. (strain ORS 278)).